The chain runs to 330 residues: Formylaminopyrimidine-binding protein (330 aa).

The signal sequence occupies residues 1 to 18 (MKSFKIISLLLAILFLAS). Residue cysteine 19 is the site of N-palmitoyl cysteine attachment. Cysteine 19 carries the S-diacylglycerol cysteine lipid modification. Substrate is bound by residues 38 to 39 (DW), tyrosine 90, asparagine 145, tyrosine 188, and glutamate 192.

It belongs to the NMT1 family. In terms of assembly, the complex is likely composed of an ATP-binding protein (ThiZ), a transmembrane protein (ThiX) and a solute-binding protein (ThiY).

It is found in the cell membrane. It functions in the pathway cofactor biosynthesis; thiamine diphosphate biosynthesis. Participates in a thiamine pyrimidine salvage pathway as part of the ABC transporter complex ThiXYZ involved in the import of thiamine degradation products. Binds the formylaminopyrimidine N-formyl-4-amino-5-aminomethyl-2-methylpyrimidine (FAMP). Does not bind thiamine. In Halalkalibacterium halodurans (strain ATCC BAA-125 / DSM 18197 / FERM 7344 / JCM 9153 / C-125) (Bacillus halodurans), this protein is Formylaminopyrimidine-binding protein.